Here is a 62-residue protein sequence, read N- to C-terminus: MARKCFFTGKGPMVGNNVSHANNKTKKRSLPNLRTVRVKLEDGTTVKLRVAASTLRTMKKRS.

This sequence belongs to the bacterial ribosomal protein bL28 family.

The protein is Large ribosomal subunit protein bL28 of Wolinella succinogenes (strain ATCC 29543 / DSM 1740 / CCUG 13145 / JCM 31913 / LMG 7466 / NCTC 11488 / FDC 602W) (Vibrio succinogenes).